We begin with the raw amino-acid sequence, 208 residues long: N-(5'-phosphoribosyl)anthranilate isomerase (208 aa).

The protein belongs to the TrpF family.

It catalyses the reaction N-(5-phospho-beta-D-ribosyl)anthranilate = 1-(2-carboxyphenylamino)-1-deoxy-D-ribulose 5-phosphate. It functions in the pathway amino-acid biosynthesis; L-tryptophan biosynthesis; L-tryptophan from chorismate: step 3/5. In Neisseria meningitidis serogroup C / serotype 2a (strain ATCC 700532 / DSM 15464 / FAM18), this protein is N-(5'-phosphoribosyl)anthranilate isomerase.